Consider the following 216-residue polypeptide: Phosphatidylserine decarboxylase proenzyme (216 aa).

S185 serves as the catalytic Schiff-base intermediate with substrate; via pyruvic acid. At S185 the chain carries Pyruvic acid (Ser); by autocatalysis.

Belongs to the phosphatidylserine decarboxylase family. PSD-A subfamily. In terms of assembly, heterodimer of a large membrane-associated beta subunit and a small pyruvoyl-containing alpha subunit. Pyruvate is required as a cofactor. Post-translationally, is synthesized initially as an inactive proenzyme. Formation of the active enzyme involves a self-maturation process in which the active site pyruvoyl group is generated from an internal serine residue via an autocatalytic post-translational modification. Two non-identical subunits are generated from the proenzyme in this reaction, and the pyruvate is formed at the N-terminus of the alpha chain, which is derived from the carboxyl end of the proenzyme. The post-translation cleavage follows an unusual pathway, termed non-hydrolytic serinolysis, in which the side chain hydroxyl group of the serine supplies its oxygen atom to form the C-terminus of the beta chain, while the remainder of the serine residue undergoes an oxidative deamination to produce ammonia and the pyruvoyl prosthetic group on the alpha chain.

The protein resides in the cell membrane. It carries out the reaction a 1,2-diacyl-sn-glycero-3-phospho-L-serine + H(+) = a 1,2-diacyl-sn-glycero-3-phosphoethanolamine + CO2. It functions in the pathway phospholipid metabolism; phosphatidylethanolamine biosynthesis; phosphatidylethanolamine from CDP-diacylglycerol: step 2/2. Functionally, catalyzes the formation of phosphatidylethanolamine (PtdEtn) from phosphatidylserine (PtdSer). The chain is Phosphatidylserine decarboxylase proenzyme from Nitrosomonas europaea (strain ATCC 19718 / CIP 103999 / KCTC 2705 / NBRC 14298).